The following is a 293-amino-acid chain: MKTVNILVEALPYIKKFHRKKIMIKYGGHAMIDEAAMDSTARDTVLLKYVGMEPVVVHGGGPEISRAMNKMGKEPKFIEGLRVTDEETMEIVKMVLVGKINTSIVSKICYHGGRAIGLSGKDSNLLLARKRAPHVVRDDETGERREIDLGLVGEIESVDPGIINMLTDNNYIPVISPIGVDRDANTLNLNADTVAGEVAAGIGAEKLIVLTDVPGILEDPSDPDTLIRRISVDELSDLVKSGIVEGGMLPKTLTCIQAINDGVSSAHIIDGRVEHSLLLEIFTKKGIGTMITE.

Substrate-binding positions include 60 to 61 (GG), arginine 82, and asparagine 188.

Belongs to the acetylglutamate kinase family. ArgB subfamily.

Its subcellular location is the cytoplasm. It carries out the reaction N-acetyl-L-glutamate + ATP = N-acetyl-L-glutamyl 5-phosphate + ADP. It participates in amino-acid biosynthesis; L-arginine biosynthesis; N(2)-acetyl-L-ornithine from L-glutamate: step 2/4. Functionally, catalyzes the ATP-dependent phosphorylation of N-acetyl-L-glutamate. The chain is Acetylglutamate kinase from Methanothermobacter thermautotrophicus (strain ATCC 29096 / DSM 1053 / JCM 10044 / NBRC 100330 / Delta H) (Methanobacterium thermoautotrophicum).